Reading from the N-terminus, the 413-residue chain is Monacolin J acid methylbutanoyltransferase (413 aa).

Residue R73 coordinates monacolin J. S76 acts as the Acyl-ester intermediate in catalysis. Monacolin J-binding residues include R173, Y188, and Y258. G366 serves as a coordination point for 2-methylbutanoate. Monacolin J contacts are provided by E388 and W390.

This sequence belongs to the class-A beta-lactamase family. Interacts with LovF.

It carries out the reaction monacolin J carboxylate + (S)-2-methylbutanoyl-[2-methylbutanoate polyketide synthase] = lovastatin carboxylate + holo-[2-methylbutanoate polyketide synthase]. It functions in the pathway polyketide biosynthesis; lovastatin biosynthesis. Monacolin J acid methylbutanoyltransferase; part of the gene cluster that mediates the biosynthesis of lovastatin (also known as mevinolin, mevacor or monacolin K), a hypolipidemic inhibitor of (3S)-hydroxymethylglutaryl-coenzyme A (HMG-CoA) reductase (HMGR). The first step in the biosynthesis of lovastatin is the production of dihydromonacolin L acid by the lovastatin nonaketide synthase lovB and the trans-acting enoyl reductase lovC via condensation of one acetyl-CoA unit and 8 malonyl-CoA units. Dihydromonacolin L acid is released from lovB by the thioesterase lovG. Next, dihydromonacolin L acid is oxidized by the dihydromonacolin L monooxygenase lovA twice to form monacolin J acid. The 2-methylbutyrate moiety of lovastatin is synthesized by the lovastatin diketide synthase lovF via condensation of one acetyl-CoA unit and one malonyl-CoA unit. Finally, the covalent attachment of this moiety to monacolin J acid is catalyzed by the transesterase lovD to yield lovastatin. LovD has broad substrate specificity and can also convert monacolin J to simvastatin using alpha-dimethylbutanoyl-S-methyl-3-mercaptopropionate (DMB-S-MMP) as the thioester acyl donor, and can also catalyze the reverse reaction and function as hydrolase in vitro. LovD has much higher activity with LovF-bound 2-methylbutanoate than with free diketide substrates. The polypeptide is Monacolin J acid methylbutanoyltransferase (Aspergillus terreus).